The chain runs to 122 residues: Small ribosomal subunit protein uS13 (122 aa).

Residues 99-122 are disordered; that stretch reads RGQRTHTNARTRKGPAKAIAGKKK.

This sequence belongs to the universal ribosomal protein uS13 family. In terms of assembly, part of the 30S ribosomal subunit. Forms a loose heterodimer with protein S19. Forms two bridges to the 50S subunit in the 70S ribosome.

Functionally, located at the top of the head of the 30S subunit, it contacts several helices of the 16S rRNA. In the 70S ribosome it contacts the 23S rRNA (bridge B1a) and protein L5 of the 50S subunit (bridge B1b), connecting the 2 subunits; these bridges are implicated in subunit movement. Contacts the tRNAs in the A and P-sites. The protein is Small ribosomal subunit protein uS13 of Bradyrhizobium sp. (strain ORS 278).